Consider the following 411-residue polypeptide: Citrate synthase (411 aa).

Catalysis depends on residues His-304 and Asp-363.

The protein belongs to the citrate synthase family.

It carries out the reaction oxaloacetate + acetyl-CoA + H2O = citrate + CoA + H(+). The protein operates within carbohydrate metabolism; tricarboxylic acid cycle; isocitrate from oxaloacetate: step 1/2. This is Citrate synthase (gltA) from Rickettsia conorii subsp. caspia (strain A-167) (Astrakhan rickettsia).